Here is a 386-residue protein sequence, read N- to C-terminus: Antilisterial bacteriocin subtilosin biosynthesis protein AlbE (386 aa).

Involved in the production of the bacteriocin subtilosin. The sequence is that of Antilisterial bacteriocin subtilosin biosynthesis protein AlbE (albE) from Bacillus subtilis (strain 168).